The chain runs to 207 residues: Ribonuclease HII (207 aa).

An RNase H type-2 domain is found at 1–207 (MDVLGIDEAG…ATVEKMKNSQ (207 aa)). 3 residues coordinate a divalent metal cation: D7, E8, and D105.

It belongs to the RNase HII family. It depends on Mn(2+) as a cofactor. Mg(2+) is required as a cofactor.

The protein localises to the cytoplasm. The enzyme catalyses Endonucleolytic cleavage to 5'-phosphomonoester.. Functionally, endonuclease that specifically degrades the RNA of RNA-DNA hybrids. The protein is Ribonuclease HII of Methanobrevibacter smithii (strain ATCC 35061 / DSM 861 / OCM 144 / PS).